The following is a 238-amino-acid chain: Single-stranded DNA-binding protein WHY2, mitochondrial (238 aa).

The N-terminal 29 residues, 1–29, are a transit peptide targeting the mitochondrion; the sequence is MMKQARSLLSRSLCDQSKSLFEASTLRGF. Residues 62-67 are required for ssDNA binding; it reads KGKAAL.

This sequence belongs to the Whirly family. Homotetramer.

It localises to the mitochondrion. In terms of biological role, single-stranded DNA-binding protein that associates with mitochondrial DNA and may play a role in the regulation of the gene expression machinery. Also seems to be required to prevent break-induced DNA rearrangements in the mitochondrial genome. Can bind to melt double-stranded DNA in vivo. The protein is Single-stranded DNA-binding protein WHY2, mitochondrial (WHY2) of Arabidopsis thaliana (Mouse-ear cress).